Consider the following 1027-residue polypeptide: Scavenger receptor cysteine-rich domain-containing protein SCART1 (1027 aa).

A signal peptide spans 1–19; sequence MRAALWTLGLGPLLLNLWA. The Extracellular segment spans residues 20-906; that stretch reads VPIGGPGALR…APFRTFWVVS (887 aa). Residues 28 to 128 form the SRCR 1 domain; the sequence is LRLAYRHSTC…HAWVVVALCS (101 aa). Disulfide bonds link C53–C117, C66–C127, and C97–C107. Residue N94 is glycosylated (N-linked (GlcNAc...) asparagine). Residue N129 is glycosylated (N-linked (GlcNAc...) asparagine). SRCR domains are found at residues 135–227, 232–326, 328–428, 434–534, 555–656, 661–761, and 786–886; these read LRLV…VVCS, ARLV…LRCS, FRMV…AVCS, LRLR…VVCS, LSLH…VFCS, LRLR…AGLS, and LRVR…VRCW. Disulfide bonds link C160/C216, C171/C226, C196/C206, C253/C315, C266/C325, and C297/C307. N-linked (GlcNAc...) asparagine glycosylation is present at N332. 7 cysteine pairs are disulfide-bonded: C353/C417, C366/C427, C397/C407, C472/C533, C503/C513, C594/C655, and C625/C635. 2 disulfides stabilise this stretch: C824/C885 and C855/C865. A helical transmembrane segment spans residues 907-927; it reads VVLGSLLGLLLLGLMAFLILP. Topologically, residues 928-1027 are cytoplasmic; the sequence is RVTQAMQRGL…AAFPLEEMTL (100 aa).

Mainly expressed by CD4(+) and CD8(+) T lymphocytes. Also highly expressed in small intestine and colon. Expressed (at protein level) in small intestine, stomach, gall bladder, and placental villi.

It is found in the membrane. Functionally, may play a role in the immune system, perhaps as a co-receptor on alphabeta and gammadelta T-cells. In Homo sapiens (Human), this protein is Scavenger receptor cysteine-rich domain-containing protein SCART1.